Consider the following 448-residue polypeptide: Protein chibby homolog 2 (448 aa).

Serine 41, serine 86, serine 89, serine 97, serine 124, serine 144, serine 148, and serine 150 each carry phosphoserine. A coiled-coil region spans residues 164 to 198; sequence KECMLQEENKSLREENKALREENRMLSKENKILQV. Residues serine 212 and serine 225 each carry the phosphoserine modification. A coiled-coil region spans residues 242–267; the sequence is KEDSTLQLLREENRALQQLLEQKQAY. A disordered region spans residues 270 to 323; it reads QAEDTAAPAEESKPAPSPHEEPCSPGLLQDQGSGLSSRFEEPKGPPARQEDSKE. Composition is skewed to basic and acidic residues over residues 279-291 and 307-323; these read EESK…HEEP and RFEE…DSKE. Residues serine 335 and serine 338 each carry the phosphoserine modification. A coiled-coil region spans residues 356–414; that stretch reads LQLLREMRQALQALLKENRLLQEENRTLQVLRAEHRGFQEENKALWENNKLKLQQKLVI.

Belongs to the chibby family. SPERT subfamily. In terms of assembly, homodimer. Binds to NEK1. As to expression, testis-specific.

The protein is Protein chibby homolog 2 of Homo sapiens (Human).